The following is a 2157-amino-acid chain: Polyketide synthase 2 (2157 aa).

Positions 7–244 are N-terminal acylcarrier protein transacylase domain (SAT); it reads FIFGDQTGGF…IPIPIWAPYH (238 aa). Residues 374–807 enclose the Ketosynthase family 3 (KS3) domain; it reads DAKIAIIGMS…GGNSALLLED (434 aa). Active-site for beta-ketoacyl synthase activity residues include cysteine 546, histidine 681, and histidine 723. Residues 908 to 1213 are malonyl-CoA:ACP transacylase (MAT) domain; sequence GFVFSGQGAQ…ASLHRKDDGW (306 aa). The active-site For acyl/malonyl transferase activity is the serine 998. The interval 1290 to 1605 is product template (PT) domain; sequence TSSVQKIIQQ…RSLLNKVLPP (316 aa). Positions 1294 to 1428 are N-terminal hotdog fold; the sequence is QKIIQQTDGP…CLLCFADPNS (135 aa). The PKS/mFAS DH domain occupies 1294–1600; the sequence is QKIIQQTDGP…FLGMSRSLLN (307 aa). Histidine 1327 functions as the Proton acceptor; for dehydratase activity in the catalytic mechanism. Positions 1455–1600 are C-terminal hotdog fold; it reads TDSLLSKGIV…FLGMSRSLLN (146 aa). Aspartate 1514 (proton donor; for dehydratase activity) is an active-site residue. A disordered region spans residues 1629–1653; the sequence is AKDTERRPLDIPTRAQRQPNSPPTG. Residues 1649–1726 form the Carrier 1 domain; the sequence is SPPTGTLGRI…ELKEFLGADQ (78 aa). O-(pantetheine 4'-phosphoryl)serine is present on serine 1686. The disordered stretch occupies residues 1729–1765; the sequence is DDAVACESSNGQHTPQTSDKGSGTLAAQKPDDDTGSD. The segment covering 1735 to 1749 has biased composition (polar residues); that stretch reads ESSNGQHTPQTSDKG. In terms of domain architecture, Carrier 2 spans 1765–1839; that stretch reads DTTLHRVCAI…SLQKALCGTE (75 aa). O-(pantetheine 4'-phosphoryl)serine is present on serine 1799. The tract at residues 1875–2151 is thioesterase (TE) domain; it reads ASPPHATSIL…MAEMGDLIGE (277 aa). Serine 1981 (for thioesterase activity) is an active-site residue.

Functionally, polyketide synthase; part of the Pks2 gene cluster that mediates the formation of infectious structures (appressoria), enabling these fungi to kill insects faster. The product of the Pks2 gene cluster is different from the one of Pks1 and has still not been identified. The sequence is that of Polyketide synthase 2 from Metarhizium guizhouense (strain ARSEF 977).